Reading from the N-terminus, the 367-residue chain is S-adenosylmethionine:tRNA ribosyltransferase-isomerase (367 aa).

It belongs to the QueA family. Monomer.

The protein localises to the cytoplasm. The enzyme catalyses 7-aminomethyl-7-carbaguanosine(34) in tRNA + S-adenosyl-L-methionine = epoxyqueuosine(34) in tRNA + adenine + L-methionine + 2 H(+). It functions in the pathway tRNA modification; tRNA-queuosine biosynthesis. In terms of biological role, transfers and isomerizes the ribose moiety from AdoMet to the 7-aminomethyl group of 7-deazaguanine (preQ1-tRNA) to give epoxyqueuosine (oQ-tRNA). This chain is S-adenosylmethionine:tRNA ribosyltransferase-isomerase, found in Beijerinckia indica subsp. indica (strain ATCC 9039 / DSM 1715 / NCIMB 8712).